Reading from the N-terminus, the 616-residue chain is Chaperone protein HscA (616 aa).

Belongs to the heat shock protein 70 family.

Functionally, chaperone involved in the maturation of iron-sulfur cluster-containing proteins. Has a low intrinsic ATPase activity which is markedly stimulated by HscB. Involved in the maturation of IscU. This is Chaperone protein HscA from Salmonella typhimurium (strain LT2 / SGSC1412 / ATCC 700720).